A 70-amino-acid chain; its full sequence is DNA-directed RNA polymerase subunit omega (70 aa).

It belongs to the RNA polymerase subunit omega family. As to quaternary structure, the RNAP catalytic core consists of 2 alpha, 1 beta, 1 beta' and 1 omega subunit. When a sigma factor is associated with the core the holoenzyme is formed, which can initiate transcription.

It carries out the reaction RNA(n) + a ribonucleoside 5'-triphosphate = RNA(n+1) + diphosphate. Functionally, promotes RNA polymerase assembly. Latches the N- and C-terminal regions of the beta' subunit thereby facilitating its interaction with the beta and alpha subunits. The polypeptide is DNA-directed RNA polymerase subunit omega (Bacillus anthracis).